The sequence spans 356 residues: Histidinol-phosphate aminotransferase (356 aa).

K214 is modified (N6-(pyridoxal phosphate)lysine).

This sequence belongs to the class-II pyridoxal-phosphate-dependent aminotransferase family. Histidinol-phosphate aminotransferase subfamily. As to quaternary structure, homodimer. The cofactor is pyridoxal 5'-phosphate.

It carries out the reaction L-histidinol phosphate + 2-oxoglutarate = 3-(imidazol-4-yl)-2-oxopropyl phosphate + L-glutamate. The protein operates within amino-acid biosynthesis; L-histidine biosynthesis; L-histidine from 5-phospho-alpha-D-ribose 1-diphosphate: step 7/9. The protein is Histidinol-phosphate aminotransferase of Escherichia coli O17:K52:H18 (strain UMN026 / ExPEC).